A 616-amino-acid polypeptide reads, in one-letter code: Adenylosuccinate synthetase 2 (616 aa).

Residues 1-26 (MDKQAERDQSAGPVKTPQETQPPAHN) are disordered. Positions 17-26 (PQETQPPAHN) are enriched in polar residues. GTP is bound by residues 87–93 (GDEGKGK) and 117–119 (GHT). The active-site Proton acceptor is the Asp-88. Mg(2+) is bound by residues Asp-88 and Gly-117. Residues 88–91 (DEGK), 115–118 (NAGH), Thr-202, Lys-216, Gln-328, Thr-343, and Lys-472 contribute to the IMP site. Residue His-118 is the Proton donor of the active site. Substrate is bound at residue 468 to 474 (AVTKKPR). Residues Arg-474 and 603-605 (GNG) each bind GTP.

The protein belongs to the adenylosuccinate synthetase family. In terms of assembly, homodimer. Mg(2+) is required as a cofactor.

Its subcellular location is the cytoplasm. The catalysed reaction is IMP + L-aspartate + GTP = N(6)-(1,2-dicarboxyethyl)-AMP + GDP + phosphate + 2 H(+). Its pathway is purine metabolism; AMP biosynthesis via de novo pathway; AMP from IMP: step 1/2. Functionally, plays an important role in the salvage pathway for purine nucleotide biosynthesis. Catalyzes the first committed step in the biosynthesis of AMP from IMP. The protein is Adenylosuccinate synthetase 2 of Trypanosoma cruzi (strain CL Brener).